The chain runs to 333 residues: Complement C1q and tumor necrosis factor-related protein 9A (333 aa).

Residues 1–19 form the signal peptide; sequence MRIWWLLLAIEICTGNINS. Collagen-like domains are found at residues 24 to 82, 95 to 154, and 155 to 191; these read RQGH…DGKV, GSPG…PGPM, and GPIGKPGPKGEAGPTGPQGEPGVRGIRGWKGDRGEKG. A disordered region spans residues 24–188; that stretch reads RQGHPGIPGN…GIRGWKGDRG (165 aa). A compositionally biased stretch (low complexity) spans 26 to 40; the sequence is GHPGIPGNPGHNGLP. 4-hydroxyproline is present on residues Pro-31, Pro-34, and Pro-40. The span at 42–57 shows a compositional bias: basic and acidic residues; that stretch reads RDGRDGAKGDKGDAGE. A 4-hydroxyproline mark is found at Pro-58, Pro-61, and Pro-64. Over residues 69-88 the composition is skewed to basic and acidic residues; it reads TSGEKGERGADGKVEAKGIK. 5-hydroxylysine occurs at positions 73 and 127. Residues Lys-73 and Lys-127 are each glycosylated (O-linked (Gal...) hydroxylysine). 4-hydroxyproline occurs at positions 151, 160, and 175. A C1q domain is found at 197–333; that stretch reads LVLPKSAFTV…FTGFLLFSSP (137 aa).

Multimers (predominantly trimers). Interacts with ADIPOQ via the C1q domain to form a heterotrimeric complex. Interacts with CTRP9B. Forms heterotrimers and heterooligomeric complexes with CTRP9B. Expressed predominantly in adipose tissue.

It localises to the secreted. Its function is as follows. Probable adipokine. Activates AMPK, AKT, and p44/42 MAPK signaling pathways. This Homo sapiens (Human) protein is Complement C1q and tumor necrosis factor-related protein 9A (C1QTNF9).